The following is a 503-amino-acid chain: ATP synthase subunit alpha (503 aa).

170–177 (GDKQTGKT) contributes to the ATP binding site.

It belongs to the ATPase alpha/beta chains family. In terms of assembly, F-type ATPases have 2 components, CF(1) - the catalytic core - and CF(0) - the membrane proton channel. CF(1) has five subunits: alpha(3), beta(3), gamma(1), delta(1), epsilon(1). CF(0) has three main subunits: a(1), b(2) and c(9-12). The alpha and beta chains form an alternating ring which encloses part of the gamma chain. CF(1) is attached to CF(0) by a central stalk formed by the gamma and epsilon chains, while a peripheral stalk is formed by the delta and b chains.

Its subcellular location is the cell inner membrane. The enzyme catalyses ATP + H2O + 4 H(+)(in) = ADP + phosphate + 5 H(+)(out). Functionally, produces ATP from ADP in the presence of a proton gradient across the membrane. The alpha chain is a regulatory subunit. The sequence is that of ATP synthase subunit alpha from Helicobacter pylori (strain HPAG1).